Here is a 563-residue protein sequence, read N- to C-terminus: Arginine--tRNA ligase (563 aa).

Positions 121 to 131 match the 'HIGH' region motif; sequence PNIAKPFSIGH.

The protein belongs to the class-I aminoacyl-tRNA synthetase family. As to quaternary structure, monomer.

It is found in the cytoplasm. The enzyme catalyses tRNA(Arg) + L-arginine + ATP = L-arginyl-tRNA(Arg) + AMP + diphosphate. The polypeptide is Arginine--tRNA ligase (Streptococcus agalactiae serotype Ia (strain ATCC 27591 / A909 / CDC SS700)).